The following is a 118-amino-acid chain: Small ribosomal subunit protein uS13 (118 aa).

The interval 91–118 is disordered; sequence HRRGLPVRGQRTKTNARTRKGPRKPIKK.

Belongs to the universal ribosomal protein uS13 family. As to quaternary structure, part of the 30S ribosomal subunit. Forms a loose heterodimer with protein S19. Forms two bridges to the 50S subunit in the 70S ribosome.

Its function is as follows. Located at the top of the head of the 30S subunit, it contacts several helices of the 16S rRNA. In the 70S ribosome it contacts the 23S rRNA (bridge B1a) and protein L5 of the 50S subunit (bridge B1b), connecting the 2 subunits; these bridges are implicated in subunit movement. Contacts the tRNAs in the A and P-sites. The chain is Small ribosomal subunit protein uS13 from Hamiltonella defensa subsp. Acyrthosiphon pisum (strain 5AT).